A 144-amino-acid chain; its full sequence is D-aminoacyl-tRNA deacylase (144 aa).

A Gly-cisPro motif, important for rejection of L-amino acids motif is present at residues 136 to 137 (GP).

The protein belongs to the DTD family. Homodimer.

The protein resides in the cytoplasm. The catalysed reaction is glycyl-tRNA(Ala) + H2O = tRNA(Ala) + glycine + H(+). The enzyme catalyses a D-aminoacyl-tRNA + H2O = a tRNA + a D-alpha-amino acid + H(+). Its function is as follows. An aminoacyl-tRNA editing enzyme that deacylates mischarged D-aminoacyl-tRNAs. Also deacylates mischarged glycyl-tRNA(Ala), protecting cells against glycine mischarging by AlaRS. Acts via tRNA-based rather than protein-based catalysis; rejects L-amino acids rather than detecting D-amino acids in the active site. By recycling D-aminoacyl-tRNA to D-amino acids and free tRNA molecules, this enzyme counteracts the toxicity associated with the formation of D-aminoacyl-tRNA entities in vivo and helps enforce protein L-homochirality. In Haemophilus influenzae (strain PittGG), this protein is D-aminoacyl-tRNA deacylase.